We begin with the raw amino-acid sequence, 37 residues long: Large ribosomal subunit protein bL36 (37 aa).

This sequence belongs to the bacterial ribosomal protein bL36 family.

The polypeptide is Large ribosomal subunit protein bL36 (Tropheryma whipplei (strain Twist) (Whipple's bacillus)).